Consider the following 336-residue polypeptide: MYTVLTGTPPFMASPLSEMYQNIREGHYPEPAHLSANARRLIVHLLAPNPAERPSLDHLLQDDFFTQGFTPDRLPAHSCHSPPIFAIPPPLGRIFRKVGQRLLTQCRPPCPFTPKEASGPGEGGPDPDSMEWDGESSLSAKEVPCLEGPIHLVAQGTLQSDLAGPEGSRRPEVEAALRHLQLCLDVGPPATQDPLGEQQPILWAPKWVDYSSKYGFGYQLLDGGRTGRHPHGPATPRREGTLPTPVPPAGPGLCLLRFLASEHALLLLFSNGMVQVSFSGVPAQLVLSGEGEGLQLTLWEQGSPGTSYSLDVPRSHGCAPTTGQHLHHALRMLQSI.

The Protein kinase; truncated domain occupies 1–65 (MYTVLTGTPP…LDHLLQDDFF (65 aa)). Disordered stretches follow at residues 109–135 (PCPFTPKEASGPGEGGPDPDSMEWDGE) and 224–245 (GRTGRHPHGPATPRREGTLPTP). One can recognise a POLO box domain in the interval 255-336 (LLRFLASEHA…HHALRMLQSI (82 aa)).

It belongs to the protein kinase superfamily. Ser/Thr protein kinase family. CDC5/Polo subfamily. Expressed in the brain, neurons and glial cells. Also expressed in highly differentiated cells, such as the serous acini in the parotid gland, distal and proximal tubules of the kidney, tubules of the seminal gland, Kupffer cells and some hepatocytes in the liver, and some cells in the germinal center of lymph nodes (at protein level).

The protein localises to the nucleus. It is found in the nucleolus. It localises to the cytoplasm. Its function is as follows. Inactive serine/threonine-protein kinase that plays a role in cell cycle progression and neuronal differentiation. The polypeptide is Inactive serine/threonine-protein kinase PLK5 (PLK5) (Homo sapiens (Human)).